The following is a 566-amino-acid chain: OTU domain-containing protein 5 (566 aa).

Disordered stretches follow at residues 1-117 (MTIL…GDAL) and 145-175 (GPGH…GAGY). A compositionally biased stretch (pro residues) spans 11 to 30 (PPDADPANEPPPPGPLPPAP). The span at 34–47 (AGVGVGGGGTGVGG) shows a compositional bias: gly residues. Residues 63–75 (ASPPPQGPLPGPP) are compositionally biased toward pro residues. Position 64 is a phosphoserine (S64). The segment covering 84–97 (AVPPGAVAGPRPQQ) has biased composition (low complexity). Positions 105 to 115 (GPGGPGGGPGD) are enriched in gly residues. S165 is modified (phosphoserine). Phosphotyrosine is present on Y175. S177 carries the post-translational modification Phosphoserine. Position 195 is a phosphothreonine (T195). In terms of domain architecture, OTU spans 213 to 336 (FIIKQMKEDG…NIHYNSVVNP (124 aa)). The segment at 218–224 (MKEDGAC) is cys-loop. D221 is a catalytic residue. C224 functions as the Nucleophile in the catalytic mechanism. The interval 273 to 283 (KRKNNCHGNHI) is variable-loop. The residue at position 323 (S323) is a Phosphoserine. The segment at 324–329 (YHRNIH) is his-loop. H329 is an active-site residue. Phosphoserine is present on residues S332 and S370. The segment at 413–499 (ARQVRGPSQP…TSSQFSAGGD (87 aa)) is disordered. Composition is skewed to low complexity over residues 425–438 (ASAT…AASS) and 445–457 (SRSP…ASSP). Position 447 is a phosphoserine (S447). The residue at position 502 (T502) is a Phosphothreonine. S503 is modified (phosphoserine).

This sequence belongs to the peptidase C85 family. In terms of assembly, interacts with TRAF3. Phosphorylation at Ser-177 is required for deubiquitinating activity. Phosphorylation at Ser-323, Ser-332 and Ser-503 by MTOR promotes its activity.

It is found in the nucleus. The enzyme catalyses Thiol-dependent hydrolysis of ester, thioester, amide, peptide and isopeptide bonds formed by the C-terminal Gly of ubiquitin (a 76-residue protein attached to proteins as an intracellular targeting signal).. Its activity is regulated as follows. Inhibited by N-ethyl-maleimide (NEM). Its function is as follows. Deubiquitinating enzyme that functions as a negative regulator of the innate immune system. Has peptidase activity towards 'Lys-48'- and 'Lys-63'-linked polyubiquitin chains. Can also cleave 'Lys-11'-linked ubiquitin chains (in vitro). Acts via TRAF3 deubiquitination and subsequent suppression of type I interferon (IFN) production. Controls neuroectodermal differentiation through cleaving 'Lys-48'-linked ubiquitin chains to counteract degradation of select chromatin regulators such as ARID1A, HDAC2 and HCF1. Acts as a positive regulator of mTORC1 and mTORC2 signaling following phosphorylation by MTOR: acts by mediating deubiquitination of BTRC, leading to its stability. In Mus musculus (Mouse), this protein is OTU domain-containing protein 5.